A 1175-amino-acid polypeptide reads, in one-letter code: Pyruvate carboxylase (1175 aa).

The 453-residue stretch at 22–474 (NANKILVANR…WTTFIDDTPS (453 aa)) folds into the Biotin carboxylation domain. Residues lysine 140, glutamate 224, and histidine 259 each coordinate ATP. The region spanning 144–341 (RNLAGKCNVP…IVAAQIQIAA (198 aa)) is the ATP-grasp domain. Residue arginine 316 is part of the active site. The region spanning 561–828 (CLIMDTTWRD…NTGITEQNAR (268 aa)) is the Pyruvate carboxyltransferase domain. Substrate contacts are provided by residues 569–573 (RDAHQ) and arginine 642. A divalent metal cation is bound at residue aspartate 570. A divalent metal cation contacts are provided by lysine 738, histidine 768, and histidine 770. At lysine 738 the chain carries N6-carboxylysine. Threonine 902 is a substrate binding site. In terms of domain architecture, Biotinyl-binding spans 1099–1174 (KADAHNPNEV…DAGDLICKIT (76 aa)). At lysine 1140 the chain carries N6-biotinyllysine.

It depends on biotin as a cofactor. The cofactor is Zn(2+).

The protein resides in the cytoplasm. The enzyme catalyses hydrogencarbonate + pyruvate + ATP = oxaloacetate + ADP + phosphate + H(+). It participates in carbohydrate biosynthesis; gluconeogenesis. In terms of biological role, pyruvate carboxylase catalyzes a 2-step reaction, involving the ATP-dependent carboxylation of the covalently attached biotin in the first step and the transfer of the carboxyl group to pyruvate in the second. This Pichia angusta (Yeast) protein is Pyruvate carboxylase (PYC).